Consider the following 171-residue polypeptide: Glutamyl-tRNA(Gln) amidotransferase subunit F, mitochondrial (171 aa).

The protein belongs to the GatF family. As to quaternary structure, subunit of the heterotrimeric GatFAB amidotransferase (AdT) complex, composed of A, B and F subunits.

It localises to the mitochondrion inner membrane. The catalysed reaction is L-glutamyl-tRNA(Gln) + L-glutamine + ATP + H2O = L-glutaminyl-tRNA(Gln) + L-glutamate + ADP + phosphate + H(+). Its function is as follows. Allows the formation of correctly charged Gln-tRNA(Gln) through the transamidation of misacylated Glu-tRNA(Gln) in the mitochondria. The reaction takes place in the presence of glutamine and ATP through an activated gamma-phospho-Glu-tRNA(Gln). Required for proper protein synthesis within the mitochondrion. In Zygosaccharomyces rouxii (strain ATCC 2623 / CBS 732 / NBRC 1130 / NCYC 568 / NRRL Y-229), this protein is Glutamyl-tRNA(Gln) amidotransferase subunit F, mitochondrial.